The primary structure comprises 80 residues: uncharacterized protein (80 aa).

This sequence to B.cereus similar ORF in glnR 5'region.

This is an uncharacterized protein from Bacillus cereus.